The chain runs to 148 residues: Transcriptional regulator MraZ (148 aa).

2 consecutive SpoVT-AbrB domains span residues 5–53 (ETAI…VEKE) and 82–125 (SALL…SEQA).

The protein belongs to the MraZ family. In terms of assembly, forms oligomers.

Its subcellular location is the cytoplasm. The protein localises to the nucleoid. The protein is Transcriptional regulator MraZ of Xylella fastidiosa (strain Temecula1 / ATCC 700964).